The sequence spans 984 residues: Hyaluronate lyase (984 aa).

Polar residues-rich tracts occupy residues 1-12 (MKQVVDNQTQNK), 19-32 (DFNQ…SWSH), and 54-66 (IQRT…SLSS). 2 disordered regions span residues 1–32 (MKQV…SWSH) and 49–68 (DKSP…SSDK). A signal peptide spans 1–40 (MKQVVDNQTQNKELVKNGDFNQTNPVSGSWSHTSAREWSA). Active-site residues include Asn-429, His-479, and Tyr-488. A compositionally biased stretch (basic and acidic residues) spans 701 to 726 (TEKDAKREDTTKEFMSKHSKDAKEKT). The interval 701–728 (TEKDAKREDTTKEFMSKHSKDAKEKTGQ) is disordered.

This sequence belongs to the polysaccharide lyase 8 family.

Its subcellular location is the secreted. The enzyme catalyses [hyaluronan](n) = n 3-(4-deoxy-beta-D-gluc-4-enuronosyl)-N-acetyl-D-glucosamine + H2O. This is Hyaluronate lyase from Streptococcus agalactiae serotype III (strain NEM316).